The primary structure comprises 769 residues: Disintegrin and metalloproteinase domain-containing protein 11 (769 aa).

The first 23 residues, 1 to 23 (MRLLRRWAFAALLLSLLPTPGLG), serve as a signal peptide directing secretion. The propeptide occupies 24–225 (TQGPAGALRW…PNRPRLRRKR (202 aa)). The tract at residues 40–78 (GGPGAPEVTEPSRLVRESSGGEVRKQQLDTRVRQEPPGG) is disordered. Residues 61 to 73 (EVRKQQLDTRVRQ) show a composition bias toward basic and acidic residues. N-linked (GlcNAc...) asparagine glycosylation is found at Asn96 and Asn163. Residues 226–734 (QVRRGHPTVH…ERYKGPSGTN (509 aa)) lie on the Extracellular side of the membrane. The Peptidase M12B domain occupies 239–438 (KYVELIVIND…GGGSCLFNKP (200 aa)). The required for localization to cerebellar cortex basket cell terminals. Also required for localization of KCNA1, KCNA2, DLG4 and ADAM22 to cerebellar cortex basket cell terminal perisomatic axons and pinceaux stretch occupies residues 332–769 (GRTFQSTSSG…NIRRGRSGGA (438 aa)). 4 disulfides stabilise this stretch: Cys349/Cys433, Cys392/Cys417, Cys394/Cys401, and Cys503/Cys523. Residues 444–531 (PPECGNGFVE…QCPPNLHKLD (88 aa)) form the Disintegrin domain. N-linked (GlcNAc...) asparagine glycosylation is found at Asn605 and Asn673. Cystine bridges form between Cys677/Cys692, Cys686/Cys698, and Cys700/Cys709. In terms of domain architecture, EGF-like spans 677–709 (CPGSGERRICSHHGVCSNEGKCICQPDWTGKDC). The helical transmembrane segment at 735 to 755 (IIIGSIAGAVLVAAIVLGGTG) threads the bilayer. Over 756–769 (WGFKNIRRGRSGGA) the chain is Cytoplasmic.

In terms of assembly, interacts with LGI1 and LGI4. Interacts with KCNA1/KV1.1, KCNA2/KV1.2, DLG4/PSD-95 and ADAM22. Post-translationally, the precursor is cleaved by a furin endopeptidase. In terms of tissue distribution, expressed predominantly in brain. Slightly detected or not at all in other tissues.

The protein localises to the presynaptic cell membrane. It localises to the perikaryon. Its subcellular location is the cell projection. The protein resides in the axon. Functionally, probable ligand for integrin in the brain. This is a non catalytic metalloprotease-like protein. Required for localization of the potassium channel subunit proteins KCNA1/KV1.1 and KCNA2/KV1.2 at cerebellar cortex basket cell distal terminals, is thereby involved in ephaptic inhibitory synchronization of Purkinje cell firing and response to stress. Plays a role in spatial learning and motor coordination. Involved in the nociceptive pain response to chemical-derived stimulation. The protein is Disintegrin and metalloproteinase domain-containing protein 11 (ADAM11) of Homo sapiens (Human).